Consider the following 149-residue polypeptide: ER export of PMA1 protein 1 (149 aa).

The Lumenal segment spans residues 1-6 (MNLYGY). The chain crosses the membrane as a helical; Signal-anchor for type II membrane protein span at residues 7–27 (FLLLIIVIAFIALLPLFSGIG). The Cytoplasmic portion of the chain corresponds to 28 to 149 (TFKLTKPKSS…KKNEAYEGFV (122 aa)).

In terms of assembly, interacts with PMA1 and PSG1.

It is found in the endoplasmic reticulum membrane. It localises to the cytoplasmic vesicle. The protein resides in the COPI-coated vesicle membrane. The protein localises to the COPII-coated vesicle membrane. Its subcellular location is the golgi apparatus membrane. In terms of biological role, specific cargo receptor protein for the plasma membrane ATPase PMA1 that acts with PSG1 to promote the transport and maturation of PMA1. EXP1 and PSG1 probably act sequentially to promote PMA1 sorting between the ER and the Golgi, with EXP1 promoting PMA1 export from the ER to the Golgi while PSG1 has a role in PMA1 maturation or quality control in the Golgi. The polypeptide is ER export of PMA1 protein 1 (Saccharomyces cerevisiae (strain ATCC 204508 / S288c) (Baker's yeast)).